A 37-amino-acid polypeptide reads, in one-letter code: Mau operon transcriptional activator (37 aa).

The protein belongs to the LysR transcriptional regulatory family.

Functionally, transcriptional activator of the mau genes involved in methylamine metabolism. In Paracoccus versutus (Thiobacillus versutus), this protein is Mau operon transcriptional activator (mauR).